The primary structure comprises 162 residues: MKKISSVFTMFALIAAILFSGFIPQQAYAETTLTPTATNKTASIQLTSDVHTLAVINTFDGVADYLIRYKRLPDNYITKSQASALGWVASKGNLAEVAPGKSIGGDVFSNREGRLPSASGRTWREADINYVSGFRNADRLVYSSDWLIYKTTDHYATFTRIR.

Positions 1-29 (MKKISSVFTMFALIAAILFSGFIPQQAYA) are cleaved as a signal peptide. The propeptide occupies 30–53 (ETTLTPTATNKTASIQLTSDVHTL). Glu-125 acts as the Proton acceptor in catalysis. His-154 (proton donor) is an active-site residue.

Belongs to the ribonuclease N1/T1 family.

It is found in the secreted. Functionally, this is a purine-specific ribonuclease. The chain is Ribonuclease from Bacillus pumilus (Bacillus mesentericus).